The following is an 856-amino-acid chain: Cyclic di-GMP phosphodiesterase PdeB (856 aa).

The next 2 membrane-spanning stretches (helical) occupy residues 7 to 27 (ILVF…YCLG) and 230 to 250 (WVSL…YVWL). The PAS domain maps to 303-350 (QKERGKITLESIAEAVILTDIEAKVIYMNPKAETLLEVASSNAVGESL). The GGDEF domain maps to 454 to 587 (RSLAVCYLDL…GTNQIHIYDD (134 aa)). The region spanning 598–852 (APKWAVRIAQ…SYCEQFETRL (255 aa)) is the EAL domain.

It is found in the cell membrane. The enzyme catalyses 3',3'-c-di-GMP + H2O = 5'-phosphoguanylyl(3'-&gt;5')guanosine + H(+). Functionally, affects motility and biofilm formation, and is linked to the regulation of sulfate uptake and assimilation. The polypeptide is Cyclic di-GMP phosphodiesterase PdeB (pdeB) (Shewanella oneidensis (strain ATCC 700550 / JCM 31522 / CIP 106686 / LMG 19005 / NCIMB 14063 / MR-1)).